The chain runs to 426 residues: 3-phosphoshikimate 1-carboxyvinyltransferase (426 aa).

Residues lysine 22, serine 23, and arginine 27 each contribute to the 3-phosphoshikimate site. Lysine 22 contributes to the phosphoenolpyruvate binding site. Phosphoenolpyruvate-binding residues include glycine 96 and arginine 124. 3-phosphoshikimate is bound by residues serine 170, serine 171, glutamine 172, serine 198, aspartate 314, asparagine 337, and lysine 341. Glutamine 172 lines the phosphoenolpyruvate pocket. Aspartate 314 acts as the Proton acceptor in catalysis. Phosphoenolpyruvate contacts are provided by arginine 345, arginine 387, and lysine 412.

Belongs to the EPSP synthase family. As to quaternary structure, monomer.

The protein resides in the cytoplasm. The enzyme catalyses 3-phosphoshikimate + phosphoenolpyruvate = 5-O-(1-carboxyvinyl)-3-phosphoshikimate + phosphate. Its pathway is metabolic intermediate biosynthesis; chorismate biosynthesis; chorismate from D-erythrose 4-phosphate and phosphoenolpyruvate: step 6/7. In terms of biological role, catalyzes the transfer of the enolpyruvyl moiety of phosphoenolpyruvate (PEP) to the 5-hydroxyl of shikimate-3-phosphate (S3P) to produce enolpyruvyl shikimate-3-phosphate and inorganic phosphate. This is 3-phosphoshikimate 1-carboxyvinyltransferase from Colwellia psychrerythraea (strain 34H / ATCC BAA-681) (Vibrio psychroerythus).